A 768-amino-acid chain; its full sequence is MQRPFLLAYLVLSLLFNSALGFPTALVPRGSSSSNITSSGPSSTPFSSATESFSTGTTVTPSSSKYPGSKTETSVSSTTETTIVPTTTTTSVITPSTTTITTTVCSTGTNSAGETTSGCSPKTITTTVPCSTSPSETASESTTTSPTTPVTTVVSTTVVTTEYASTSTKQGGEITTTFVTKNIPTTYLTTIAPTSSVTTVTNFTPTTITTTVCSTGTNSAGETTSGCSPKTVTTTVPCSTGTGEYTTEATAPVTTAVTTTVVTTESSTGTNSAGKTTTSYTTKSVPTTYVFDFGKGILDQSCGGVFSNNGSSQVQLRDVVLMNGTVVYDSNGAWDSSPLEEWLQRQKKVSIERIFENIGPSAVYPSILPGVVIASPSQTHPDYFYQWIRDSALTINSIVSHSADPAIETLLQYLNVSFHLQRTNNTLGAGIGYTNDTVALGDPKWNVDNTAFTEPWGRPQNDGPALRSIAILKIIDYIKQSGTDLGAKYPFQSTADIFDDIVRWDLRFIIDHWNSSGFDLWEEVNGMHFFTLLVQLSAVDRSLSYFNASERSSPFVEELRQTRRDISKFLVDPANGFINGKYNYIVETPMIADTLRSGLDISTLLAANTVHDAPSASHLPFDIDDPAVLNTLHHLMLHMRSIYPINDSSKNATGIALGRYPEDVYDGYGVGEGNPWVLATCAASTTLYQLIYRHISEQHDLVVPMNNDCSNAFWSELVFSNLTTLGNDEGYLILEFNTPAFNQTIQKIFQLADSFLVKLKATWEQTGN.

Residues 1 to 21 form the signal peptide; sequence MQRPFLLAYLVLSLLFNSALG. Disordered regions lie at residues 29–83 and 125–149; these read RGSS…ETTI and TTTV…PTTP. The span at 30 to 48 shows a compositional bias: low complexity; sequence GSSSSNITSSGPSSTPFSS. N-linked (GlcNAc...) asparagine glycosylation occurs at Asn-35. Positions 49–66 are enriched in polar residues; the sequence is ATESFSTGTTVTPSSSKY. Composition is skewed to low complexity over residues 71-83 and 131-149; these read TETS…ETTI and STSP…PTTP. N-linked (GlcNAc...) asparagine glycosylation is found at Asn-309, Asn-323, Asn-415, Asn-424, and Asn-435. A h subunit region spans residues 349–692; sequence VSIERIFENI…ASTTLYQLIY (344 aa). Trp-456 serves as a coordination point for substrate. N-linked (GlcNAc...) asparagine glycosylation occurs at Asn-514. Asp-519 functions as the Proton acceptor in the catalytic mechanism. Catalysis depends on Glu-522, which acts as the Proton donor. N-linked (GlcNAc...) asparagine glycans are attached at residues Asn-547, Asn-646, Asn-651, Asn-721, and Asn-742. A y subunit region spans residues 693–768; the sequence is RHISEQHDLV…LKATWEQTGN (76 aa).

This sequence belongs to the glycosyl hydrolase 15 family.

It catalyses the reaction Hydrolysis of terminal (1-&gt;4)-linked alpha-D-glucose residues successively from non-reducing ends of the chains with release of beta-D-glucose.. The protein is Glucoamylase S2 (STA2) of Saccharomyces cerevisiae (Baker's yeast).